Reading from the N-terminus, the 156-residue chain is Ribonuclease H (156 aa).

Residues 2–144 (SQFDVTVFTD…CDVLARAQAS (143 aa)) enclose the RNase H type-1 domain. The Mg(2+) site is built by D11, E49, D71, and D136.

Belongs to the RNase H family. Monomer. Mg(2+) is required as a cofactor.

The protein resides in the cytoplasm. It catalyses the reaction Endonucleolytic cleavage to 5'-phosphomonoester.. Its function is as follows. Endonuclease that specifically degrades the RNA of RNA-DNA hybrids. This chain is Ribonuclease H, found in Nitratidesulfovibrio vulgaris (strain ATCC 29579 / DSM 644 / CCUG 34227 / NCIMB 8303 / VKM B-1760 / Hildenborough) (Desulfovibrio vulgaris).